We begin with the raw amino-acid sequence, 179 residues long: Diphosphoinositol polyphosphate phosphohydrolase 2 (179 aa).

Residues R9, K17–R19, and S38–R40 each bind substrate. Positions K17–K143 constitute a Nudix hydrolase domain. Mg(2+) contacts are provided by G49 and E65. Positions G50–G71 match the Nudix box motif. E68 (proton acceptor) is an active-site residue. E69 contributes to the Mg(2+) binding site. Residues R88 to H90, R114, and K132 each bind substrate.

Belongs to the Nudix hydrolase family. DIPP subfamily. Mg(2+) is required as a cofactor. Mn(2+) serves as cofactor.

It localises to the cytoplasm. It carries out the reaction diphospho-myo-inositol polyphosphate + H2O = myo-inositol polyphosphate + phosphate.. The enzyme catalyses 5-diphospho-1D-myo-inositol 1,2,3,4,6-pentakisphosphate + H2O = 1D-myo-inositol hexakisphosphate + phosphate + H(+). It catalyses the reaction 3,5-bis(diphospho)-1D-myo-inositol 1,2,4,6-tetrakisphosphate + H2O = 3-diphospho-1D-myo-inositol 1,2,4,5,6-pentakisphosphate + phosphate + 2 H(+). The catalysed reaction is 5-diphospho-1D-myo-inositol 1,3,4,6-tetrakisphosphate + H2O = 1D-myo-inositol 1,3,4,5,6-pentakisphosphate + phosphate + H(+). It carries out the reaction P(1),P(6)-bis(5'-adenosyl) hexaphosphate + H2O = 2 ATP + 2 H(+). The enzyme catalyses P(1),P(5)-bis(5'-adenosyl) pentaphosphate + H2O = ADP + ATP + 2 H(+). It catalyses the reaction 5-phospho-alpha-D-ribose 1-diphosphate + H2O = alpha-D-ribose 1,5-bisphosphate + phosphate + H(+). Its function is as follows. Cleaves the beta-phosphate from diphosphoinositol polyphosphates such as PP-InsP5 (diphosphoinositol pentakisphosphate), PP-InsP4 (diphosphoinositol tetrakisphosphate) and [PP]2-InsP4 (bisdiphosphoinositol tetrakisphosphate), suggesting that it may play a role in signal transduction. Diadenosine polyphosphates, particularly Ap6A (P(1),P(6)-bis(5a-adenosyl) hexaphosphate) and Ap5A (P(1),P(5)-bis(5'-adenosyl) pentaphosphate) are downstream effectors of a signaling cascade that regulates cardiac KATP channels, can also be substrates, although with lower preference than the diphosphoinositol polyphosphates. Can also catalyze the hydrolysis of 5-phosphoribose 1-diphosphate, generating the glycolytic activator ribose 1,5-bisphosphate. Does not play a role in U8 snoRNA decapping activity. Binds U8 snoRNA. This chain is Diphosphoinositol polyphosphate phosphohydrolase 2, found in Mus musculus (Mouse).